A 303-amino-acid chain; its full sequence is MPGFTCCVPGCYNNSHRDKALHFYTFPKDAELRRLWLKNVSRAGVSGCFSTFQPTTGHRLCSVHFQGGRKTYTVRVPTIFPLRGVNERKVARRPAGAAAARRRQQQQQQQQQQQQQQQQQQPSPSASTAQTTQLQPNLVSASAAVLLTLQAAVDSSQAPGTVPPVPTTPTGEDVKPIDLTVQVEFAAAEGAAAAAAASELEAATAGLEAAECPMGPQLVVVGEEGFPDTGSDHSYSLSSGTTEEELLRKLNEQRDILALMEVKMKEMKGSIRHLRLTEAKLREELREKDRLLAMAVIRKKHGM.

Residues 6 to 64 form a THAP-type zinc finger; sequence CCVPGCYNNSHRDKALHFYTFPKDAELRRLWLKNVSRAGVSGCFSTFQPTTGHRLCSVH. Disordered regions lie at residues 85–132 and 155–174; these read VNER…AQTT and SSQA…GEDV. Low complexity predominate over residues 93–132; that stretch reads RPAGAAAARRRQQQQQQQQQQQQQQQQQQPSPSASTAQTT. The HCFC1-binding motif (HBM) motif lies at 232-235; that stretch reads DHSY. The stretch at 244-294 forms a coiled coil; the sequence is EELLRKLNEQRDILALMEVKMKEMKGSIRHLRLTEAKLREELREKDRLLAM.

Belongs to the THAP11 family. In terms of assembly, forms homodimers. Interacts via HBM with HCFC1. Forms a complex with HCFC1 and ZNF143.

The protein resides in the nucleus. It localises to the cytoplasm. Functionally, transcription factor, which has both transcriptional activation and repression activities. Also modulates chromatin accessibility. In complex with HCFC1 and ZNF143, regulates the expression of several genes, including AP2S1, ESCO2, OPHN1, RBL1, UBXN8 and ZNF32. May regulate the expression of genes that encode both cytoplasmic and mitochondrial ribosomal proteins. Required for normal mitochondrial development and function. Regulates mitochondrial gene expression, including that of components of the electron transport chain. Involved in the maintainance of pluripotency in early embryonic cells, possibly through its action on mitochondrial maturation which is required to meet high energy demands of these cells. Required for early development of retina, preventing premature exit of retinal progenitor cells from the cell cycle. This effect may also be mediated by its action on mitochondria. Through the regulation of MMACHC gene expression, controls cobalamin metabolism. Required for normal brain development and neural precursor differentiation. Involved in cell growth. The chain is THAP domain-containing protein 11 (THAP11) from Bos taurus (Bovine).